The primary structure comprises 70 residues: Cytochrome c oxidase subunit 8B, mitochondrial (70 aa).

Residues 1-24 (MPRLPPILRLLQAPEKYTVIPKAR) constitute a mitochondrion transit peptide. The Mitochondrial matrix segment spans residues 25-35 (ISSKPAKSPTS). The helical transmembrane segment at 36-59 (AMDQAVGMSVIIAGFMVPAGWVLS) threads the bilayer. The Mitochondrial intermembrane portion of the chain corresponds to 60 to 70 (HLESYKRSSAA).

This sequence belongs to the cytochrome c oxidase VIII family. As to quaternary structure, component of the cytochrome c oxidase (complex IV, CIV), a multisubunit enzyme composed of 14 subunits. The complex is composed of a catalytic core of 3 subunits MT-CO1, MT-CO2 and MT-CO3, encoded in the mitochondrial DNA, and 11 supernumerary subunits COX4I, COX5A, COX5B, COX6A, COX6B, COX6C, COX7A, COX7B, COX7C, COX8 and NDUFA4, which are encoded in the nuclear genome. The complex exists as a monomer or a dimer and forms supercomplexes (SCs) in the inner mitochondrial membrane with NADH-ubiquinone oxidoreductase (complex I, CI) and ubiquinol-cytochrome c oxidoreductase (cytochrome b-c1 complex, complex III, CIII), resulting in different assemblies (supercomplex SCI(1)III(2)IV(1) and megacomplex MCI(2)III(2)IV(2)).

Its subcellular location is the mitochondrion inner membrane. The protein operates within energy metabolism; oxidative phosphorylation. Functionally, component of the cytochrome c oxidase, the last enzyme in the mitochondrial electron transport chain which drives oxidative phosphorylation. The respiratory chain contains 3 multisubunit complexes succinate dehydrogenase (complex II, CII), ubiquinol-cytochrome c oxidoreductase (cytochrome b-c1 complex, complex III, CIII) and cytochrome c oxidase (complex IV, CIV), that cooperate to transfer electrons derived from NADH and succinate to molecular oxygen, creating an electrochemical gradient over the inner membrane that drives transmembrane transport and the ATP synthase. Cytochrome c oxidase is the component of the respiratory chain that catalyzes the reduction of oxygen to water. Electrons originating from reduced cytochrome c in the intermembrane space (IMS) are transferred via the dinuclear copper A center (CU(A)) of subunit 2 and heme A of subunit 1 to the active site in subunit 1, a binuclear center (BNC) formed by heme A3 and copper B (CU(B)). The BNC reduces molecular oxygen to 2 water molecules using 4 electrons from cytochrome c in the IMS and 4 protons from the mitochondrial matrix. This is Cytochrome c oxidase subunit 8B, mitochondrial (Cox8b) from Rattus norvegicus (Rat).